The following is a 245-amino-acid chain: Thiopurine S-methyltransferase (245 aa).

S-adenosyl-L-methionine is bound at residue 29–40 (WREKWVDGKIGF). F40 serves as a coordination point for substrate. K58 is subject to N6-acetyllysine. Residues L69, E90, and R152 each coordinate S-adenosyl-L-methionine.

Belongs to the class I-like SAM-binding methyltransferase superfamily. TPMT family. As to quaternary structure, monomer.

It is found in the cytoplasm. The catalysed reaction is S-adenosyl-L-methionine + a thiopurine = S-adenosyl-L-homocysteine + a thiopurine S-methylether.. This Felis catus (Cat) protein is Thiopurine S-methyltransferase (TPMT).